Here is a 283-residue protein sequence, read N- to C-terminus: Prolyl 4-hydroxylase 1 (283 aa).

Residues 1-6 are Cytoplasmic-facing; sequence MAPAMK. A helical; Signal-anchor for type II membrane protein membrane pass occupies residues 7 to 27; that stretch reads IVFGLLTFVTVGMVIGSLLQL. The Lumenal portion of the chain corresponds to 28–283; sequence AFINRLEDSY…TKWMRQKATS (256 aa). In terms of domain architecture, Fe2OG dioxygenase spans 162-279; it reads NGELIQVLRY…KWSATKWMRQ (118 aa). His180, Asp182, and His260 together coordinate Fe cation. Lys270 serves as a coordination point for 2-oxoglutarate.

This sequence belongs to the P4HA family. Fe(2+) is required as a cofactor. Requires L-ascorbate as cofactor.

Its subcellular location is the endoplasmic reticulum membrane. The enzyme catalyses L-prolyl-[collagen] + 2-oxoglutarate + O2 = trans-4-hydroxy-L-prolyl-[collagen] + succinate + CO2. Catalyzes the post-translational formation of 4-hydroxyproline in -Xaa-Pro-Gly- sequences in proline-rich peptide sequences of plant glycoproteins and other proteins. Hydroxylates preferentially prolines in second positions in the -Pro-Pro-Gly-triplets. Hydroxyprolines are important constituent of many plant cell wall glycoproteins such as extensins, hydroxyproline-rich glycoproteins, lectins and arabinogalactan proteins. Can hydroxylate collagen-like peptides and hypoxia-inducible transcription factor peptides. The polypeptide is Prolyl 4-hydroxylase 1 (Arabidopsis thaliana (Mouse-ear cress)).